The sequence spans 235 residues: Phosphoribosylaminoimidazole-succinocarboxamide synthase (235 aa).

This sequence belongs to the SAICAR synthetase family.

The catalysed reaction is 5-amino-1-(5-phospho-D-ribosyl)imidazole-4-carboxylate + L-aspartate + ATP = (2S)-2-[5-amino-1-(5-phospho-beta-D-ribosyl)imidazole-4-carboxamido]succinate + ADP + phosphate + 2 H(+). Its pathway is purine metabolism; IMP biosynthesis via de novo pathway; 5-amino-1-(5-phospho-D-ribosyl)imidazole-4-carboxamide from 5-amino-1-(5-phospho-D-ribosyl)imidazole-4-carboxylate: step 1/2. In Clostridium acetobutylicum (strain ATCC 824 / DSM 792 / JCM 1419 / IAM 19013 / LMG 5710 / NBRC 13948 / NRRL B-527 / VKM B-1787 / 2291 / W), this protein is Phosphoribosylaminoimidazole-succinocarboxamide synthase.